Consider the following 89-residue polypeptide: Rho beta-crystallin (89 aa).

Histidine 31 is a binding site for substrate.

Belongs to the aldo/keto reductase family. As to quaternary structure, monomer.

The polypeptide is Rho beta-crystallin (Lepidodactylus lugubris (Mourning gecko)).